The sequence spans 860 residues: Photoactivated adenylate cyclase subunit beta (860 aa).

Residues 56-149 (LRRLMYLSKS…GRMYGDWHMK (94 aa)) enclose the BLUF 1 domain. A Guanylate cyclase 1 domain is found at 205–333 (VVTFIYLVEF…DCINTTSRIA (129 aa)). Positions 420–443 (RPPIFDDTPKGKPRPRTPGYGGRQ) are disordered. One can recognise a BLUF 2 domain in the interval 471–563 (LTTLTYISQA…RAYPAEWTLT (93 aa)). A Guanylate cyclase 2 domain is found at 619–748 (VMLATDICSF…AVSARVMEVE (130 aa)). Positions 819–860 (KPLALEPEEAKQDYRVSPGRMRHGDSGRRSNSAQGKRSTQVR) are disordered. The span at 847 to 860 (RSNSAQGKRSTQVR) shows a compositional bias: polar residues.

The protein belongs to the adenylyl cyclase class-4/guanylyl cyclase family. As to quaternary structure, heterotetramer of two alpha and two beta subunits. FAD is required as a cofactor.

The protein localises to the cell projection. The protein resides in the cilium. It localises to the flagellum. The enzyme catalyses ATP = 3',5'-cyclic AMP + diphosphate. Its function is as follows. Acts as a photoreceptor for the step-up photophobic response. This chain is Photoactivated adenylate cyclase subunit beta, found in Euglena longa (Euglenophycean alga).